Here is a 31-residue protein sequence, read N- to C-terminus: Small protein MgtS (31 aa).

The Periplasmic segment spans residues 1–4; it reads MLGN. The chain crosses the membrane as a helical span at residues 5–25; the sequence is MNVFMAVLGIILFSGFLAAYF. The Cytoplasmic segment spans residues 26–31; the sequence is SHKWDD.

In terms of assembly, interacts with MgtA.

It localises to the cell inner membrane. Functionally, modulates intracellular Mg(2+) levels to maintain cellular integrity upon Mg(2+) limitation. Acts by binding and stabilizing the Mg(2+) transporter MgtA, thereby leading to increased intracellular level of Mg(2+). May inhibit FtsH proteolysis of MgtA. The polypeptide is Small protein MgtS (Escherichia coli (strain K12)).